We begin with the raw amino-acid sequence, 207 residues long: dTTP/UTP pyrophosphatase (207 aa).

Catalysis depends on Asp79, which acts as the Proton acceptor.

Belongs to the Maf family. YhdE subfamily. It depends on a divalent metal cation as a cofactor.

The protein resides in the cytoplasm. It catalyses the reaction dTTP + H2O = dTMP + diphosphate + H(+). The enzyme catalyses UTP + H2O = UMP + diphosphate + H(+). Its function is as follows. Nucleoside triphosphate pyrophosphatase that hydrolyzes dTTP and UTP. May have a dual role in cell division arrest and in preventing the incorporation of modified nucleotides into cellular nucleic acids. This Rhodopseudomonas palustris (strain BisB18) protein is dTTP/UTP pyrophosphatase.